Consider the following 430-residue polypeptide: Probable aspartic-type endopeptidase TRV_06366 (430 aa).

Positions 1 to 17 (MHVSTLLVAVLLPLALS) are cleaved as a signal peptide. Residues 18-87 (KPTPRKKTSS…SKATAGSGKE (70 aa)) constitute a propeptide, activation peptide. Positions 61–104 (HEMEGYHPQPISKLPGNSKATAGSGKEGVESQDEKGEVVNNPTD) are disordered. Residues 87–104 (EGVESQDEKGEVVNNPTD) are compositionally biased toward basic and acidic residues. The region spanning 109–427 (FLSPVTIGGQ…DQRGPSISLA (319 aa)) is the Peptidase A1 domain. Asp-125 is an active-site residue. Asn-306 is a glycosylation site (N-linked (GlcNAc...) asparagine). Asp-314 is a catalytic residue.

Belongs to the peptidase A1 family.

Its subcellular location is the secreted. Its function is as follows. Probable secreted aspartic-type endopeptidase which contributes to virulence. The chain is Probable aspartic-type endopeptidase TRV_06366 from Trichophyton verrucosum (strain HKI 0517).